Consider the following 107-residue polypeptide: Cytochrome c2 (107 aa).

Q1 is subject to Pyrrolidone carboxylic acid. C13, C16, H17, and M79 together coordinate heme c.

The protein belongs to the cytochrome c family. Post-translationally, binds 1 heme c group covalently per subunit.

Its subcellular location is the periplasm. In terms of biological role, cytochrome c2 is found mainly in purple, non-sulfur, photosynthetic bacteria where it functions as the electron donor to the oxidized bacteriochlorophyll in the photophosphorylation pathway. However, it may also have a role in the respiratory chain and is found in some non-photosynthetic bacteria. This Rhodoplanes tepidamans (Rhodoplanes cryptolactis) protein is Cytochrome c2.